A 327-amino-acid polypeptide reads, in one-letter code: MFDAAPIKKVSVVIPVYNEQESLPELIRRTTTACESLSKAWEILLIDDGSSDSSAELMVKASQEADSHIISILLNRNYGQHAAIMAGFSHVSGDLIITLDADLQNPPEEIPRLVAKADEGFDVVGTVRQNRQDSLFRKSASKIINLLIQRTTGKAMGDYGCMLRAYRRPIIDTMLRCHERSTFIPILANIFARRATEIPVHHAEREFGDSKYSFMRLINLMYDLVTCLTTTPLRLLSLLGSVIAIGGFSLSVLLIVLRLALGPQWAAEGVFMLFAVLFTFIGAQFIGMGLLGEYIGRIYNDVRARPRYFVQQVIYPESTPFTEESHQ.

The Cytoplasmic portion of the chain corresponds to 1-235; that stretch reads MFDAAPIKKV…TCLTTTPLRL (235 aa). A helical transmembrane segment spans residues 236–256; it reads LSLLGSVIAIGGFSLSVLLIV. The Periplasmic segment spans residues 257–269; sequence LRLALGPQWAAEG. A helical transmembrane segment spans residues 270 to 290; sequence VFMLFAVLFTFIGAQFIGMGL. At 291 to 327 the chain is on the cytoplasmic side; it reads LGEYIGRIYNDVRARPRYFVQQVIYPESTPFTEESHQ.

This sequence belongs to the glycosyltransferase 2 family.

The protein localises to the cell inner membrane. It carries out the reaction UDP-4-deoxy-4-formamido-beta-L-arabinose + di-trans,octa-cis-undecaprenyl phosphate = 4-deoxy-4-formamido-alpha-L-arabinopyranosyl di-trans,octa-cis-undecaprenyl phosphate + UDP. It participates in glycolipid biosynthesis; 4-amino-4-deoxy-alpha-L-arabinose undecaprenyl phosphate biosynthesis; 4-amino-4-deoxy-alpha-L-arabinose undecaprenyl phosphate from UDP-4-deoxy-4-formamido-beta-L-arabinose and undecaprenyl phosphate: step 1/2. It functions in the pathway bacterial outer membrane biogenesis; lipopolysaccharide biosynthesis. In terms of biological role, catalyzes the transfer of 4-deoxy-4-formamido-L-arabinose from UDP to undecaprenyl phosphate. The modified arabinose is attached to lipid A and is required for resistance to polymyxin and cationic antimicrobial peptides. The protein is Undecaprenyl-phosphate 4-deoxy-4-formamido-L-arabinose transferase of Salmonella choleraesuis (strain SC-B67).